A 192-amino-acid chain; its full sequence is Orotate phosphoribosyltransferase 2 (192 aa).

116 to 124 is a 5-phospho-alpha-D-ribose 1-diphosphate binding site; the sequence is EDIVTTGLS. Orotate-binding residues include threonine 120 and arginine 148.

The protein belongs to the purine/pyrimidine phosphoribosyltransferase family. PyrE subfamily. As to quaternary structure, homodimer. It depends on Mg(2+) as a cofactor.

It carries out the reaction orotidine 5'-phosphate + diphosphate = orotate + 5-phospho-alpha-D-ribose 1-diphosphate. The protein operates within pyrimidine metabolism; UMP biosynthesis via de novo pathway; UMP from orotate: step 1/2. Its function is as follows. Catalyzes the transfer of a ribosyl phosphate group from 5-phosphoribose 1-diphosphate to orotate, leading to the formation of orotidine monophosphate (OMP). This Mesorhizobium japonicum (strain LMG 29417 / CECT 9101 / MAFF 303099) (Mesorhizobium loti (strain MAFF 303099)) protein is Orotate phosphoribosyltransferase 2.